Reading from the N-terminus, the 130-residue chain is Aspartate 1-decarboxylase (130 aa).

The Schiff-base intermediate with substrate; via pyruvic acid role is filled by serine 25. At serine 25 the chain carries Pyruvic acid (Ser). Substrate is bound at residue threonine 57. Tyrosine 58 functions as the Proton donor in the catalytic mechanism. 73 to 75 (GAT) lines the substrate pocket.

The protein belongs to the PanD family. In terms of assembly, heterooctamer of four alpha and four beta subunits. Requires pyruvate as cofactor. Post-translationally, is synthesized initially as an inactive proenzyme, which is activated by self-cleavage at a specific serine bond to produce a beta-subunit with a hydroxyl group at its C-terminus and an alpha-subunit with a pyruvoyl group at its N-terminus.

It is found in the cytoplasm. It carries out the reaction L-aspartate + H(+) = beta-alanine + CO2. The protein operates within cofactor biosynthesis; (R)-pantothenate biosynthesis; beta-alanine from L-aspartate: step 1/1. Its function is as follows. Catalyzes the pyruvoyl-dependent decarboxylation of aspartate to produce beta-alanine. The polypeptide is Aspartate 1-decarboxylase (Lactiplantibacillus plantarum (strain ATCC BAA-793 / NCIMB 8826 / WCFS1) (Lactobacillus plantarum)).